The following is a 737-amino-acid chain: Lysyl oxidase homolog 2A (737 aa).

A signal peptide spans 1–18 (MAVSSALCIFSLLVLAQA). 4 SRCR domains span residues 29-130 (LRLA…VICN), 159-270 (IRPI…VSCV), 294-393 (VRLR…VRCN), and 403-512 (IRLS…VSCS). Cystine bridges form between C55-C119, C68-C129, C99-C109, C188-C259, C201-C269, C235-C245, C319-C382, C332-C392, and C363-C373. N256 is a glycosylation site (N-linked (GlcNAc...) asparagine). N-linked (GlcNAc...) asparagine glycosylation is present at N423. Disulfide bonds link C432–C498, C445–C511, and C479–C489. Positions 516-718 (PDLVLNAQLV…WTYSCHIGGS (203 aa)) are lysyl-oxidase like. Residues D517 and L518 each coordinate Ca(2+). Disulfide bonds link C541–C592, C547–C662, C624–C640, and C630–C652. Residues H593, H595, and H597 each contribute to the Cu cation site. N-linked (GlcNAc...) asparagine glycosylation occurs at N611. The segment at residues 620–656 (KASFCLEDTHCDEGISKRYHCANFGEQGITVGCWDTY) is a cross-link (lysine tyrosylquinone (Lys-Tyr)). Y656 carries the 2',4',5'-topaquinone modification. Ca(2+) is bound by residues E689, D691, N694, and N695. C699 and C713 form a disulfide bridge.

Belongs to the lysyl oxidase family. Cu cation is required as a cofactor. Lysine tyrosylquinone residue serves as cofactor. The lysine tyrosylquinone cross-link (LTQ) is generated by condensation of the epsilon-amino group of a lysine with a topaquinone produced by oxidation of tyrosine.

Its subcellular location is the secreted. It is found in the extracellular space. It localises to the extracellular matrix. The protein localises to the basement membrane. The protein resides in the nucleus. Its subcellular location is the chromosome. It is found in the endoplasmic reticulum. It carries out the reaction L-lysyl-[protein] + O2 + H2O = (S)-2-amino-6-oxohexanoyl-[protein] + H2O2 + NH4(+). Its function is as follows. Mediates the post-translational oxidative deamination of lysine residues on target proteins leading to the formation of deaminated lysine (allysine). Acts as a transcription corepressor and specifically mediates deamination of trimethylated 'Lys-4' of histone H3 (H3K4me3), a specific tag for epigenetic transcriptional activation. Shows no activity against histone H3 when it is trimethylated on 'Lys-9' (H3K9me3) or 'Lys-27' (H3K27me3) or when 'Lys-4' is monomethylated (H3K4me1) or dimethylated (H3K4me2). Also mediates deamination of methylated TAF10, a member of the transcription factor IID (TFIID) complex, which induces release of TAF10 from promoters, leading to inhibition of TFIID-dependent transcription. LOXL2-mediated deamination of TAF10 results in transcriptional repression of genes required for embryonic stem cell pluripotency. Involved in epithelial to mesenchymal transition (EMT) and participates in repression of E-cadherin, probably by mediating deamination of histone H3. When secreted into the extracellular matrix, promotes cross-linking of extracellular matrix proteins by mediating oxidative deamination of peptidyl lysine residues in precursors to fibrous collagen and elastin. Acts as a regulator of sprouting angiogenesis, probably via collagen IV scaffolding. Acts as a regulator of chondrocyte differentiation, probably by regulating expression of factors that control chondrocyte differentiation. Required with loxl2b for correct expression of Sox2 and for neural differentiation. In Danio rerio (Zebrafish), this protein is Lysyl oxidase homolog 2A (loxl2a).